The primary structure comprises 293 residues: 4-hydroxy-tetrahydrodipicolinate synthase (293 aa).

Thr-45 serves as a coordination point for pyruvate. Tyr-133 acts as the Proton donor/acceptor in catalysis. Lys-161 functions as the Schiff-base intermediate with substrate in the catalytic mechanism. Ile-204 is a binding site for pyruvate.

Belongs to the DapA family. In terms of assembly, homotetramer; dimer of dimers.

It is found in the cytoplasm. It carries out the reaction L-aspartate 4-semialdehyde + pyruvate = (2S,4S)-4-hydroxy-2,3,4,5-tetrahydrodipicolinate + H2O + H(+). The protein operates within amino-acid biosynthesis; L-lysine biosynthesis via DAP pathway; (S)-tetrahydrodipicolinate from L-aspartate: step 3/4. In terms of biological role, catalyzes the condensation of (S)-aspartate-beta-semialdehyde [(S)-ASA] and pyruvate to 4-hydroxy-tetrahydrodipicolinate (HTPA). This Yersinia pseudotuberculosis serotype I (strain IP32953) protein is 4-hydroxy-tetrahydrodipicolinate synthase.